Here is a 727-residue protein sequence, read N- to C-terminus: Glucans biosynthesis glucosyltransferase H (727 aa).

The segment at 17-41 (GSAMPNERPGPMEPQSLSQMPEGFP) is disordered. The next 6 membrane-spanning stretches (helical) occupy residues 58–80 (FFVVGGALLLSSFAIYEMGAVFS), 95–117 (FAINFCWIALAFCSGIAGFLLLL), 407–429 (GIMAYLSSPFWLLLILTGLMLAL), 457–479 (ALRLFYITMVVLFGPKIFGVLLL), 499–521 (VLFEVILSALIAPIMMFIHCGAV), and 572–594 (LLAWMSPALIGLWLAVPISAWTG).

The protein belongs to the glycosyltransferase 2 family. OpgH subfamily.

It localises to the cell inner membrane. It functions in the pathway glycan metabolism; osmoregulated periplasmic glucan (OPG) biosynthesis. In terms of biological role, involved in the biosynthesis of osmoregulated periplasmic glucans (OPGs). The protein is Glucans biosynthesis glucosyltransferase H of Shewanella oneidensis (strain ATCC 700550 / JCM 31522 / CIP 106686 / LMG 19005 / NCIMB 14063 / MR-1).